Here is a 505-residue protein sequence, read N- to C-terminus: Deoxyguanosinetriphosphate triphosphohydrolase (505 aa).

The HD domain occupies 66 to 273 (RLTHSMEVQQ…MEAADDISYC (208 aa)).

Belongs to the dGTPase family. Type 1 subfamily. As to quaternary structure, homotetramer. Mg(2+) serves as cofactor.

It carries out the reaction dGTP + H2O = 2'-deoxyguanosine + triphosphate + H(+). In terms of biological role, dGTPase preferentially hydrolyzes dGTP over the other canonical NTPs. The protein is Deoxyguanosinetriphosphate triphosphohydrolase of Serratia proteamaculans (strain 568).